Consider the following 361-residue polypeptide: Ribosomal RNA large subunit methyltransferase M (361 aa).

S-adenosyl-L-methionine is bound by residues S186, 219–222 (CPGG), D238, D258, and D275. K304 (proton acceptor) is an active-site residue.

It belongs to the class I-like SAM-binding methyltransferase superfamily. RNA methyltransferase RlmE family. RlmM subfamily. Monomer.

The protein localises to the cytoplasm. It carries out the reaction cytidine(2498) in 23S rRNA + S-adenosyl-L-methionine = 2'-O-methylcytidine(2498) in 23S rRNA + S-adenosyl-L-homocysteine + H(+). Its function is as follows. Catalyzes the 2'-O-methylation at nucleotide C2498 in 23S rRNA. This is Ribosomal RNA large subunit methyltransferase M from Pseudoalteromonas translucida (strain TAC 125).